The following is a 71-amino-acid chain: Conotoxin TxMMSK-05 (71 aa).

The first 20 residues, M1–A20, serve as a signal peptide directing secretion. Residues V21 to R52 constitute a propeptide that is removed on maturation. Cystine bridges form between C54–C70, C55–C66, and C60–C69.

It belongs to the conotoxin M superfamily. In terms of tissue distribution, expressed by the venom duct.

It is found in the secreted. The protein is Conotoxin TxMMSK-05 of Conus textile (Cloth-of-gold cone).